The following is an 87-amino-acid chain: Acyl-CoA-binding protein (87 aa).

One can recognise an ACB domain in the interval 2–87; sequence VSQLFEEKAK…VDQLIAKYSS (86 aa). An acyl-CoA is bound by residues 29-33, Lys-51, and Lys-55; that span reads YALYK. Lys-51 participates in a covalent cross-link: Glycyl lysine isopeptide (Lys-Gly) (interchain with G-Cter in ubiquitin). A Glycyl lysine isopeptide (Lys-Gly) (interchain with G-Cter in ubiquitin) cross-link involves residue Lys-72. An an acyl-CoA-binding site is contributed by Tyr-74.

It belongs to the ACBP family.

Functionally, binds medium- and long-chain acyl-CoA esters with very high affinity and may function as an intracellular carrier of acyl-CoA esters. Enhances the in vitro activity of the ceramide synthase complex. The protein is Acyl-CoA-binding protein (ACB1) of Saccharomyces cerevisiae (strain ATCC 204508 / S288c) (Baker's yeast).